The sequence spans 431 residues: Neuronal pentraxin-2 (431 aa).

An N-terminal signal peptide occupies residues 1 to 15 (MLALLAASVALAVAA). Residues N148 and N189 are each glycosylated (N-linked (GlcNAc...) asparagine). The Pentraxin (PTX) domain occupies 223–424 (DAFKVSLPLR…GASKWPVETC (202 aa)). Cysteines 253 and 313 form a disulfide. 5 residues coordinate Ca(2+): N277, E355, Q356, D357, and Q367. N-linked (GlcNAc...) asparagine glycosylation occurs at N393.

Homooligomer or heterooligomer (probably pentamer) with neuronal pentraxin receptor (NPTXR). Requires Ca(2+) as cofactor. Brain, pancreas, liver, heart and skeletal muscle. Highest levels are seen in the testis.

It localises to the secreted. Likely to play role in the modification of cellular properties that underlie long-term plasticity. Binds to agar matrix in a calcium-dependent manner. The sequence is that of Neuronal pentraxin-2 (NPTX2) from Homo sapiens (Human).